Reading from the N-terminus, the 488-residue chain is MESLAHLPGIFLPLAGCVLALSLTTIVYRTVTNPLSHIPGPQISKWSSLIEQYYWFAGTKVEYVDYLHRKYGPIVRVTPTEVDICDLPAVREIHRVRGGYLKSEWYKSLTPPGVTSLLTLIEPAQYSEWRRLLAGPLSDTSLGKVEPMVTNHVHATIDRIASDLQSQGVSDLYKWWTYMATDVVSELSFGEPIGLLARPKETAWVMDYLDKVGIMHAWRTTFPFVFVLGRFMPVHPFKHAIQAIGLLGKWARQSIQQYRQHIQEQPESPKPTLFTKLFKTGKFDDFQLTYLAGSYITAGSHTTAVTLLYLIYAICSDNEVRQKLLAEIRTLPENFRHDELRHLPYLNQVITETLRKYAVVSSALPRVVPAGGATLAGYYLPGGTTVSTQAYTLHRNEAIFPNPEKFDPSRWESPTQDMKDAYMPFGGASRMCIGNSLALMEIRLTTTLFLRRFPEVHMSRQNGMRDEDLAQEQYLIMAPRGQRLLVEA.

Residues 7 to 27 traverse the membrane as a helical segment; sequence LPGIFLPLAGCVLALSLTTIV. Position 432 (Cys-432) interacts with heme.

It belongs to the cytochrome P450 family. Requires heme as cofactor.

It localises to the membrane. The protein operates within secondary metabolite biosynthesis. Its function is as follows. Cytochrome P450 monooxygenase; part of the gene cluster that mediates the biosynthesis of nigerpyrone and its derivatives carbonarone A and pestalamide A. The biosynthesis pathway begins with the polyketide assembly by epaA to form phenylacetyl triketide precursor from successive condensation of two malonyl-CoA, presumably with one phenylacetyl-CoA starter unit produced by the phenylacetyl-CoA ligase epaB. For the nigerpyrone biosynthesis, the reactive polyketide chain is released as an aldehyde through the R-domain. A nonenzymatic cyclization and dehydration may create nigerpyrone. For the biosynthesis of carbonarone A and pestalamide A, an extra methyl group is added through the C-methyltransferase domain. Several further steps involving the dehydrogenase orf1, the cytochrome P450 monooxygenase orf2 and the FAD-dependent monooxygenase orf3 are required to form a carbonarone A precursor which is converted to carbonarone A via cyclization. The O-acetyltransferase epaC could catalyze the transfer of 2-methylsuccinyl-CoA, a common intermediate in the ethylmalonyl-CoA pathway, to generate the final product pestalamide A. The polypeptide is Cytochrome P450 monooxygenase orf2 (Aspergillus niger (strain ATCC MYA-4892 / CBS 513.88 / FGSC A1513)).